A 364-amino-acid polypeptide reads, in one-letter code: Spermidine/putrescine import ATP-binding protein PotA (364 aa).

The 231-residue stretch at 6–236 folds into the ABC transporter domain; it reads IEIRQIYKSY…PANLHVAMFI (231 aa). 38–45 is an ATP binding site; it reads GPSGCGKT.

It belongs to the ABC transporter superfamily. Spermidine/putrescine importer (TC 3.A.1.11.1) family. In terms of assembly, the complex is composed of two ATP-binding proteins (PotA), two transmembrane proteins (PotB and PotC) and a solute-binding protein (PotD).

The protein localises to the cell inner membrane. The catalysed reaction is ATP + H2O + polyamine-[polyamine-binding protein]Side 1 = ADP + phosphate + polyamineSide 2 + [polyamine-binding protein]Side 1.. Part of the ABC transporter complex PotABCD involved in spermidine/putrescine import. Responsible for energy coupling to the transport system. This is Spermidine/putrescine import ATP-binding protein PotA from Legionella pneumophila (strain Paris).